A 110-amino-acid chain; its full sequence is Prothymosin alpha (110 aa).

At Met1 the chain carries N-acetylmethionine. Positions 1-110 are disordered; it reads MSDAAVDTSS…TKKQKTDEDD (110 aa). Ser2 is subject to N-acetylserine; in Prothymosin alpha, N-terminally processed. Ser2 carries the phosphoserine modification. Residue Thr8 is modified to Phosphothreonine; by CK2. Ser9 and Ser10 each carry phosphoserine. Thr13 and Thr14 each carry phosphothreonine; by CK2. Positions 13-31 are enriched in basic and acidic residues; sequence TTKDLKEKKEVVEEAENGR. Lys15 carries the N6-acetyllysine; alternate modification. Lys15 carries the N6-succinyllysine; alternate modification. Over residues 32-41 the composition is skewed to low complexity; the sequence is EAPANGNANE. The span at 42-83 shows a compositional bias: acidic residues; the sequence is ENGEQEADNEVDEEEEEGGEEEEEEEEGDGEEEDGDEDEEAE. Over residues 100–110 the composition is skewed to basic and acidic residues; the sequence is DTKKQKTDEDD. At Thr101 the chain carries Phosphothreonine. N6-acetyllysine; alternate is present on Lys102. Lys102 is covalently cross-linked (Glycyl lysine isopeptide (Lys-Gly) (interchain with G-Cter in SUMO2); alternate). Thr106 is subject to Phosphothreonine.

The protein belongs to the pro/parathymosin family. In terms of assembly, interacts with NUPR1; regulates apoptotic process. In terms of processing, covalently linked to a small RNA of about 20 nucleotides.

It is found in the nucleus. In terms of biological role, prothymosin alpha may mediate immune function by conferring resistance to certain opportunistic infections. The chain is Prothymosin alpha (PTMA) from Bos taurus (Bovine).